Here is a 187-residue protein sequence, read N- to C-terminus: Transcriptional activator of sulfur metabolism MET28 (187 aa).

Positions 105–168 (DKIKQERRRK…EFWKAKLNDI (64 aa)) constitute a bZIP domain. Residues 106–136 (KIKQERRRKNTEASQRFRIRKKQKNFENMNK) form a basic motif region. Residues 137 to 151 (LQNLNTQINKLRDRI) are leucine-zipper.

The protein belongs to the bZIP family. As to quaternary structure, interacts with MET4 to form a heteromeric complex which also includes CBF1. Forms two alternate complexes associating MET28 with MET4 and either MET31 or MET32. Binds to DNA through the MET4-MET28-CBF1 complex.

The protein localises to the cytoplasm. Its subcellular location is the nucleus. Functionally, acts as an accessory factor in the activation of sulfur amino acids metabolism genes. Possesses no intrinsic transcription activation abilities. Binds to the MET16 promoter as a complex with MET4 and CBF1. Enhances the DNA-binding activity of CBF1. The chain is Transcriptional activator of sulfur metabolism MET28 (MET28) from Saccharomyces cerevisiae (strain ATCC 204508 / S288c) (Baker's yeast).